A 145-amino-acid chain; its full sequence is Ribonuclease H (145 aa).

The region spanning 2–143 (SKKEVAIYTD…ADSLARKAII (142 aa)) is the RNase H type-1 domain. Residues D11, E49, D71, and D135 each coordinate Mg(2+).

It belongs to the RNase H family. As to quaternary structure, monomer. Requires Mg(2+) as cofactor.

It localises to the cytoplasm. It carries out the reaction Endonucleolytic cleavage to 5'-phosphomonoester.. In terms of biological role, endonuclease that specifically degrades the RNA of RNA-DNA hybrids. In Wolbachia sp. subsp. Drosophila simulans (strain wRi), this protein is Ribonuclease H.